An 885-amino-acid chain; its full sequence is Alanine--tRNA ligase (885 aa).

Residues histidine 574, histidine 578, cysteine 676, and histidine 680 each contribute to the Zn(2+) site.

Belongs to the class-II aminoacyl-tRNA synthetase family. Zn(2+) serves as cofactor.

The protein localises to the cytoplasm. The enzyme catalyses tRNA(Ala) + L-alanine + ATP = L-alanyl-tRNA(Ala) + AMP + diphosphate. In terms of biological role, catalyzes the attachment of alanine to tRNA(Ala) in a two-step reaction: alanine is first activated by ATP to form Ala-AMP and then transferred to the acceptor end of tRNA(Ala). Also edits incorrectly charged Ser-tRNA(Ala) and Gly-tRNA(Ala) via its editing domain. In Syntrophobacter fumaroxidans (strain DSM 10017 / MPOB), this protein is Alanine--tRNA ligase.